Consider the following 275-residue polypeptide: Chlorobenzene dihydrodiol dehydrogenase (275 aa).

The active-site Proton acceptor is the tyrosine 155.

This sequence belongs to the short-chain dehydrogenases/reductases (SDR) family.

It catalyses the reaction (1R,2R)-3-chlorocyclohexa-3,5-diene-1,2-diol + NAD(+) = 3-chlorocatechol + NADH + H(+). The protein operates within aromatic compound metabolism. Its function is as follows. Can transform various dihydrodiols of chlorobenzenes and chlorotoluenes into the respective catechols. The protein is Chlorobenzene dihydrodiol dehydrogenase of Cupriavidus sp. (strain PS12).